Reading from the N-terminus, the 1478-residue chain is Zinc finger protein 518A (1478 aa).

4 consecutive C2H2-type zinc fingers follow at residues 152-174, 209-231, 236-258, and 264-287; these read FPCE…RKTH, FQCE…IHRH, YKCG…LRVH, and FTCH…ITLH. The tract at residues 355 to 394 is disordered; it reads TQTKSEDQSQEQLNEEKGGRQHCEDGDKPIESGSEKATVL. A Glycyl lysine isopeptide (Lys-Gly) (interchain with G-Cter in SUMO2) cross-link involves residue K358. A compositionally biased stretch (basic and acidic residues) spans 368–388; that stretch reads NEEKGGRQHCEDGDKPIESGS. Residues K390 and K428 each participate in a glycyl lysine isopeptide (Lys-Gly) (interchain with G-Cter in SUMO2) cross-link. The segment at 464-484 is disordered; the sequence is PSPALQPNTEKESTANLPPQA. Residue K518 forms a Glycyl lysine isopeptide (Lys-Gly) (interchain with G-Cter in SUMO2) linkage. Residue S652 is modified to Phosphoserine. The disordered stretch occupies residues 656-694; sequence VCENLQRESSNKTVTQQSTSDSDTTSPLRKESSNSDSLL. A compositionally biased stretch (low complexity) spans 670-681; that stretch reads TQQSTSDSDTTS. Residues K707, K792, K882, K895, K987, K1008, K1041, K1055, K1078, K1180, and K1441 each participate in a glycyl lysine isopeptide (Lys-Gly) (interchain with G-Cter in SUMO2) cross-link. A C2H2-type 5 zinc finger spans residues 1444–1466; it reads FNCWFCGRVFDNQDVWAGHGQRH.

It belongs to the krueppel C2H2-type zinc-finger protein family.

Its subcellular location is the nucleus. In terms of biological role, through its association with the EHMT1-EHMT2/G9A and PRC2/EED-EZH2 histone methyltransferase complexes may function in gene silencing, regulating repressive post-translational methylation of histone tails at promoters of target genes. The polypeptide is Zinc finger protein 518A (Znf518a) (Rattus norvegicus (Rat)).